A 292-amino-acid chain; its full sequence is Probable alpha-L-glutamate ligase (292 aa).

Positions 104–287 constitute an ATP-grasp domain; the sequence is HQLLAAKGID…VATRIIEHVE (184 aa). Residues K141, 178 to 179, D187, and 211 to 213 contribute to the ATP site; these read EF and RSN. Residues D248, E260, and N262 each contribute to the Mg(2+) site. Residues D248, E260, and N262 each contribute to the Mn(2+) site.

It belongs to the RimK family. The cofactor is Mg(2+). Requires Mn(2+) as cofactor.

This Stenotrophomonas maltophilia (strain R551-3) protein is Probable alpha-L-glutamate ligase.